Consider the following 377-residue polypeptide: Pyruvate dehydrogenase E1 component subunit alpha, mitochondrial (377 aa).

Residues 1-26 constitute a mitochondrion transit peptide; sequence MLSNFLKVNSKALGHIRTFASKSGEI. Residues His83, Tyr109, Arg110, Gly156, Val158, Asp187, Gly188, Ala189, Asn216, and Tyr218 each coordinate pyruvate. Positions 109, 110, 156, 158, 187, 188, 189, and 216 each coordinate thiamine diphosphate. Residue Asp187 coordinates Mg(2+). Mg(2+) is bound by residues Asn216 and Tyr218. His283 serves as a coordination point for thiamine diphosphate.

Tetramer of 2 alpha and 2 beta subunits. It depends on thiamine diphosphate as a cofactor. Requires Mg(2+) as cofactor.

Its subcellular location is the mitochondrion matrix. It catalyses the reaction N(6)-[(R)-lipoyl]-L-lysyl-[protein] + pyruvate + H(+) = N(6)-[(R)-S(8)-acetyldihydrolipoyl]-L-lysyl-[protein] + CO2. Its activity is regulated as follows. E1 activity is regulated by phosphorylation (inactivation) and dephosphorylation (activation) of the alpha subunit. The pyruvate dehydrogenase complex catalyzes the overall conversion of pyruvate to acetyl-CoA and CO(2). It contains multiple copies of three enzymatic components: pyruvate dehydrogenase (E1), dihydrolipoamide acetyltransferase (E2) and lipoamide dehydrogenase (E3). This Dictyostelium discoideum (Social amoeba) protein is Pyruvate dehydrogenase E1 component subunit alpha, mitochondrial (pdhA).